A 176-amino-acid chain; its full sequence is Nucleoside triphosphate/diphosphate phosphatase (176 aa).

Residue R23 is the Proton donor of the active site. N87, D103, D105, D107, D120, and E123 together coordinate Mg(2+).

The protein belongs to the Ntdp family. Requires Mg(2+) as cofactor.

It catalyses the reaction a ribonucleoside 5'-triphosphate + H2O = a ribonucleoside 5'-diphosphate + phosphate + H(+). The enzyme catalyses a ribonucleoside 5'-diphosphate + H2O = a ribonucleoside 5'-phosphate + phosphate + H(+). Its function is as follows. Has nucleoside phosphatase activity towards nucleoside triphosphates and nucleoside diphosphates. The protein is Nucleoside triphosphate/diphosphate phosphatase (yjjG) of Lactococcus lactis subsp. lactis (strain IL1403) (Streptococcus lactis).